The chain runs to 568 residues: AT-rich interactive domain-containing protein 3B (568 aa).

Met-1 is modified (N-acetylmethionine). The span at 1 to 22 shows a compositional bias: low complexity; the sequence is MEPLQQQQQQQQQKQPQQPLLQ. The interval 1–174 is disordered; that stretch reads MEPLQQQQQQ…SVPTAGQPSW (174 aa). Ser-87 carries the post-translational modification Phosphoserine. Residues 88–107 are compositionally biased toward acidic residues; that stretch reads EPEEEEGGLEDEDGDDDVAE. Residues 151–160 show a composition bias toward basic and acidic residues; the sequence is TKEDHTKDAS. The segment at 201–374 is interaction with RB1; it reads SRDFAKLYEL…SSPKIRFSIL (174 aa). The region spanning 213-305 is the ARID domain; sequence DPERKEFLDD…YLYAYECEKK (93 aa). A Phosphoserine modification is found at Ser-309. Position 370 is an asymmetric dimethylarginine (Arg-370). Positions 378–403 are disordered; it reads SSSGTSASSPRIPPASTLRKGDGVPV. An REKLES domain is found at 425–522; sequence GPLEHLRERL…GVLFAQKPVV (98 aa). The segment at 495-518 is interaction with ARID3A; the sequence is SNIGSINMSVDIDGTTYTGVLFAQ. Over residues 529–559 the composition is skewed to low complexity; that stretch reads TPQSIGSSASSSNSSSSHCSPSPTSSRGTPS. The disordered stretch occupies residues 529-568; it reads TPQSIGSSASSSNSSSSHCSPSPTSSRGTPSAEPSTSWSL.

In terms of assembly, heterodimer with ARID3A. Interacts with unphosphorylated RB1. As to expression, expressed at high levels in testis. Also expressed in prostate, thyroid and thymus.

The protein localises to the nucleus. Its function is as follows. Transcription factor involved in the production of cranial mesenchymal tissues. Favors nuclear targeting of ARID3A. This is AT-rich interactive domain-containing protein 3B (Arid3b) from Mus musculus (Mouse).